Consider the following 327-residue polypeptide: Sideroflexin FSF1 (327 aa).

A2 carries the N-acetylalanine modification. 4 consecutive transmembrane segments (helical) span residues 98–118, 143–163, 179–199, and 272–292; these read NLVV…TVFW, SQLL…ALGL, LILG…VNVF, and ANLG…LGIF.

This sequence belongs to the sideroflexin family.

It is found in the mitochondrion membrane. Mitochondrial amino-acid transporter that mediates transport of serine into mitochondria. The chain is Sideroflexin FSF1 from Saccharomyces cerevisiae (strain ATCC 204508 / S288c) (Baker's yeast).